The primary structure comprises 515 residues: UBP3-associated protein BRE5 (515 aa).

The 133-residue stretch at 8–140 (ICFAFLQNYY…FDITNDIIRF (133 aa)) folds into the NTF2 domain. Residues 157 to 166 (QSNEENSVSA) show a composition bias toward low complexity. Disordered stretches follow at residues 157–410 (QSNE…PVFS) and 485–515 (KTVK…KRKD). Basic and acidic residues predominate over residues 168–201 (EEDKIRHESGVEKEKEKEKSPEISKPKAKKETVK). Ser187 is subject to Phosphoserine. The segment covering 202–213 (DTTAPTESSTQE) has biased composition (polar residues). Composition is skewed to basic and acidic residues over residues 262 to 282 (LNEK…KEGS) and 299 to 319 (EVSD…EIKP). At Ser282 the chain carries Phosphoserine. The segment covering 330 to 341 (SGNNASTPSSSP) has biased composition (polar residues). Position 336 is a phosphothreonine (Thr336). The residue at position 340 (Ser340) is a Phosphoserine. Basic and acidic residues predominate over residues 374–396 (IRPETLPKKPTERKFEMGNRRDN). Residue Ser398 is modified to Phosphoserine. Residues 418–494 (YPIYIRGTNG…KTVKKPTSNN (77 aa)) enclose the RRM domain. Positions 489–503 (KPTSNNPPGIFTNGT) are enriched in polar residues. Basic residues predominate over residues 504–515 (RSHRKQPLKRKD).

Heterotetramer with UBP3; contains two molecules of BRE5 and two molecules of UBP3. Forms a complex composed of CDC48, DOA1, deubiquitinase UBP3 and probably BRE5. Within the complex, interacts (via C-terminus) with CDC48; the interaction is direct and UBP3-independent.

Functionally, has a role in de-ubiquitination. In conjunction with UBP3, cleaves ubiquitin, leading to the subsequent mono-ubiquitination of sec23. This Saccharomyces cerevisiae (strain ATCC 204508 / S288c) (Baker's yeast) protein is UBP3-associated protein BRE5 (BRE5).